Here is a 162-residue protein sequence, read N- to C-terminus: Beta-lactoglobulin-1 (162 aa).

2 cysteine pairs are disulfide-bonded: Cys-66–Cys-160 and Cys-106–Cys-119.

Belongs to the calycin superfamily. Lipocalin family. As to quaternary structure, monomer. In terms of tissue distribution, synthesized in mammary gland and secreted in milk.

It localises to the secreted. Functionally, primary component of whey, it binds retinol and is probably involved in the transport of that molecule. The chain is Beta-lactoglobulin-1 (LGB1) from Equus asinus (Donkey).